The following is a 299-amino-acid chain: Protein N-terminal and lysine N-methyltransferase EFM7 (299 aa).

S-adenosyl-L-methionine is bound by residues W74, 100–102 (GAG), D122, W155, and S178.

It belongs to the class I-like SAM-binding methyltransferase superfamily. EFM7 family.

Its subcellular location is the cytoplasm. Its function is as follows. S-adenosyl-L-methionine-dependent protein methyltransferase that trimethylates the N-terminal glycine 'Gly-2' of elongation factor 1-alpha, before also catalyzing the mono- and dimethylation of 'Lys-3'. This chain is Protein N-terminal and lysine N-methyltransferase EFM7, found in Cryptococcus neoformans var. neoformans serotype D (strain B-3501A) (Filobasidiella neoformans).